The chain runs to 213 residues: FMN-dependent NADH:quinone oxidoreductase (213 aa).

Residue 17–19 (SSS) coordinates FMN.

This sequence belongs to the azoreductase type 1 family. In terms of assembly, homodimer. FMN serves as cofactor.

It carries out the reaction 2 a quinone + NADH + H(+) = 2 a 1,4-benzosemiquinone + NAD(+). The enzyme catalyses N,N-dimethyl-1,4-phenylenediamine + anthranilate + 2 NAD(+) = 2-(4-dimethylaminophenyl)diazenylbenzoate + 2 NADH + 2 H(+). Functionally, quinone reductase that provides resistance to thiol-specific stress caused by electrophilic quinones. Also exhibits azoreductase activity. Catalyzes the reductive cleavage of the azo bond in aromatic azo compounds to the corresponding amines. This is FMN-dependent NADH:quinone oxidoreductase from Ruminiclostridium cellulolyticum (strain ATCC 35319 / DSM 5812 / JCM 6584 / H10) (Clostridium cellulolyticum).